The following is a 320-amino-acid chain: Ferrochelatase (320 aa).

Fe cation-binding residues include H194 and E275.

It belongs to the ferrochelatase family.

It localises to the cytoplasm. The enzyme catalyses heme b + 2 H(+) = protoporphyrin IX + Fe(2+). The protein operates within porphyrin-containing compound metabolism; protoheme biosynthesis; protoheme from protoporphyrin-IX: step 1/1. Catalyzes the ferrous insertion into protoporphyrin IX. This Cronobacter sakazakii (strain ATCC BAA-894) (Enterobacter sakazakii) protein is Ferrochelatase.